Consider the following 336-residue polypeptide: Holliday junction branch migration complex subunit RuvB (336 aa).

Residues 1 to 182 are large ATPase domain (RuvB-L); that stretch reads MKERIVNLET…FGMSFRMQFY (182 aa). ATP is bound by residues leucine 21, arginine 22, glycine 63, lysine 66, threonine 67, serine 68, 129–131, arginine 172, tyrosine 182, and arginine 219; that span reads EDF. Threonine 67 serves as a coordination point for Mg(2+). The tract at residues 183-253 is small ATPAse domain (RuvB-S); sequence SPSELSLIIK…ITLHALNELG (71 aa). Positions 256-336 are head domain (RuvB-H); the sequence is ELGFDEADLA…IPTLNPQTLF (81 aa). The DNA site is built by arginine 310 and arginine 315.

This sequence belongs to the RuvB family. Homohexamer. Forms an RuvA(8)-RuvB(12)-Holliday junction (HJ) complex. HJ DNA is sandwiched between 2 RuvA tetramers; dsDNA enters through RuvA and exits via RuvB. An RuvB hexamer assembles on each DNA strand where it exits the tetramer. Each RuvB hexamer is contacted by two RuvA subunits (via domain III) on 2 adjacent RuvB subunits; this complex drives branch migration. In the full resolvosome a probable DNA-RuvA(4)-RuvB(12)-RuvC(2) complex forms which resolves the HJ.

Its subcellular location is the cytoplasm. It carries out the reaction ATP + H2O = ADP + phosphate + H(+). In terms of biological role, the RuvA-RuvB-RuvC complex processes Holliday junction (HJ) DNA during genetic recombination and DNA repair, while the RuvA-RuvB complex plays an important role in the rescue of blocked DNA replication forks via replication fork reversal (RFR). RuvA specifically binds to HJ cruciform DNA, conferring on it an open structure. The RuvB hexamer acts as an ATP-dependent pump, pulling dsDNA into and through the RuvAB complex. RuvB forms 2 homohexamers on either side of HJ DNA bound by 1 or 2 RuvA tetramers; 4 subunits per hexamer contact DNA at a time. Coordinated motions by a converter formed by DNA-disengaged RuvB subunits stimulates ATP hydrolysis and nucleotide exchange. Immobilization of the converter enables RuvB to convert the ATP-contained energy into a lever motion, pulling 2 nucleotides of DNA out of the RuvA tetramer per ATP hydrolyzed, thus driving DNA branch migration. The RuvB motors rotate together with the DNA substrate, which together with the progressing nucleotide cycle form the mechanistic basis for DNA recombination by continuous HJ branch migration. Branch migration allows RuvC to scan DNA until it finds its consensus sequence, where it cleaves and resolves cruciform DNA. The polypeptide is Holliday junction branch migration complex subunit RuvB (Helicobacter pylori (strain P12)).